The primary structure comprises 406 residues: Ribulose bisphosphate carboxylase large chain (406 aa).

Asn101 and Thr151 together coordinate substrate. Lys153 serves as the catalytic Proton acceptor. Lys155 contacts substrate. Residues Lys179, Asp181, and Glu182 each coordinate Mg(2+). Lys179 carries the N6-carboxylysine modification. Catalysis depends on His272, which acts as the Proton acceptor. The substrate site is built by Arg273, His305, and Ser357.

Belongs to the RuBisCO large chain family. Type I subfamily. In terms of assembly, heterohexadecamer of 8 large chains and 8 small chains; disulfide-linked. The disulfide link is formed within the large subunit homodimers. Mg(2+) serves as cofactor. The disulfide bond which can form in the large chain dimeric partners within the hexadecamer appears to be associated with oxidative stress and protein turnover.

The protein localises to the plastid. Its subcellular location is the chloroplast. The enzyme catalyses 2 (2R)-3-phosphoglycerate + 2 H(+) = D-ribulose 1,5-bisphosphate + CO2 + H2O. It carries out the reaction D-ribulose 1,5-bisphosphate + O2 = 2-phosphoglycolate + (2R)-3-phosphoglycerate + 2 H(+). In terms of biological role, ruBisCO catalyzes two reactions: the carboxylation of D-ribulose 1,5-bisphosphate, the primary event in carbon dioxide fixation, as well as the oxidative fragmentation of the pentose substrate in the photorespiration process. Both reactions occur simultaneously and in competition at the same active site. In Trichomanes striatum (Fern), this protein is Ribulose bisphosphate carboxylase large chain (rbcL).